We begin with the raw amino-acid sequence, 414 residues long: Solute carrier family 25 member 46-B (414 aa).

Residues methionine 1 to glutamate 13 are compositionally biased toward basic and acidic residues. The tract at residues methionine 1–serine 89 is disordered. The span at tyrosine 29–threonine 50 shows a compositional bias: polar residues. A Solcar 1 repeat occupies glutamine 92–proline 183. The next 6 helical transmembrane spans lie at phenylalanine 99–leucine 119, methionine 159–phenylalanine 179, histidine 198–isoleucine 218, leucine 254–isoleucine 274, phenylalanine 310–leucine 330, and leucine 379–leucine 399. A Solcar 2 repeat occupies glutamate 307–threonine 412.

The protein belongs to the mitochondrial carrier (TC 2.A.29) family.

The protein localises to the mitochondrion outer membrane. In terms of biological role, may play a role in mitochondrial dynamics by controlling mitochondrial membrane fission. This is Solute carrier family 25 member 46-B (slc25a46-b) from Xenopus laevis (African clawed frog).